We begin with the raw amino-acid sequence, 89 residues long: Small ribosomal subunit protein uS15 (89 aa).

It belongs to the universal ribosomal protein uS15 family. In terms of assembly, part of the 30S ribosomal subunit. Forms a bridge to the 50S subunit in the 70S ribosome, contacting the 23S rRNA.

Its function is as follows. One of the primary rRNA binding proteins, it binds directly to 16S rRNA where it helps nucleate assembly of the platform of the 30S subunit by binding and bridging several RNA helices of the 16S rRNA. In terms of biological role, forms an intersubunit bridge (bridge B4) with the 23S rRNA of the 50S subunit in the ribosome. This is Small ribosomal subunit protein uS15 from Pelodictyon phaeoclathratiforme (strain DSM 5477 / BU-1).